The sequence spans 706 residues: Coiled-coil domain-containing protein 177 (706 aa).

Residues 1–11 (MVDPVPEEEKE) show a composition bias toward acidic residues. Disordered stretches follow at residues 1 to 63 (MVDP…GGRR), 179 to 262 (ASAL…LREL), and 268 to 287 (ASARNSCPAGSASSAPNPLG). Low complexity-rich tracts occupy residues 28–49 (PPDAQGAQQPAASSASASAAAP) and 179–209 (ASALSGGSSSSCSSSSSLPASPASRVARRTS). A compositionally biased stretch (pro residues) spans 210 to 221 (PSPPARSRPPPA). The segment covering 242–257 (ALSSESGASSSSYSGE) has biased composition (low complexity). Ser310 carries the post-translational modification Phosphoserine. A coiled-coil region spans residues 360–624 (AAHGQWEQQR…QTRLEKERAQ (265 aa)). 4 disordered regions span residues 364–386 (QWEQQRVRAEQRREREEREKQRA), 398–425 (VEERRGRRGREEREAARRRQQQCERSEE), 448–580 (DDRL…EREH), and 651–706 (ERSE…LDRK). Residues 368-386 (QRVRAEQRREREEREKQRA) are compositionally biased toward basic and acidic residues. Basic and acidic residues-rich tracts occupy residues 448-529 (DDRL…REGL), 548-580 (QEQRARELRERARREELQGRRAKEAAERKEREH), and 651-663 (ERSEQLSRERRSA). Positions 664-674 (LESARSTARAS) are enriched in low complexity. Basic and acidic residues predominate over residues 676 to 706 (HVREKVREETNTRSFDRMVREAQLHASLDRK).

The chain is Coiled-coil domain-containing protein 177 (Ccdc177) from Mus musculus (Mouse).